Here is a 94-residue protein sequence, read N- to C-terminus: Large ribosomal subunit protein bL25 (94 aa).

The protein belongs to the bacterial ribosomal protein bL25 family. In terms of assembly, part of the 50S ribosomal subunit; part of the 5S rRNA/L5/L18/L25 subcomplex. Contacts the 5S rRNA. Binds to the 5S rRNA independently of L5 and L18.

Functionally, this is one of the proteins that binds to the 5S RNA in the ribosome where it forms part of the central protuberance. This is Large ribosomal subunit protein bL25 from Escherichia coli (strain K12 / DH10B).